The sequence spans 169 residues: Disulfide bond formation protein B (169 aa).

Over 1-14 the chain is Cytoplasmic; it reads MSNDTFYLKREKRF. A helical transmembrane segment spans residues 15 to 31; that stretch reads LVLLGIICLSLIGGALY. Residues 32–49 lie on the Periplasmic side of the membrane; it reads MQIALGEAPCPLCILQRY. Residues cysteine 41 and cysteine 44 are joined by a disulfide bond. Residues 50–64 form a helical membrane-spanning segment; the sequence is ALLFIAIFAFIGAAM. Topologically, residues 65–71 are cytoplasmic; the sequence is NGRRGVT. Residues 72–89 traverse the membrane as a helical segment; the sequence is VFEALVTLSALCGIAAAG. Residues 90–144 are Periplasmic-facing; the sequence is RHAWILAHPSDSCGIDILQPIVDGLPLATLFPTGFQVSGFCTTPYPPVLGLSLAQ. Cysteine 102 and cysteine 130 are joined by a disulfide. A helical transmembrane segment spans residues 145–163; that stretch reads WALTAFVLTAILVPACIIR. The Cytoplasmic segment spans residues 164–169; sequence NRRKPY.

This sequence belongs to the DsbB family.

Its subcellular location is the cell inner membrane. In terms of biological role, required for disulfide bond formation in some periplasmic proteins. Acts by oxidizing the DsbA protein. The sequence is that of Disulfide bond formation protein B from Pseudomonas syringae pv. tomato (strain ATCC BAA-871 / DC3000).